A 686-amino-acid chain; its full sequence is MGGAWQEAVVRSIGAADERMVRLSGWASLALALGLVCVVVPVVNYMRLNPWVFRVMHHWRHHVMRRHGAMCRKLVQQRTLWLALLWCMLGGACAVVGSADVVVVTKRLGRVAAAFMPALFLLTLRPSPLPYTLYLSLLPMHKWLGRVVVLQATVHSALYTWYFATSGKMAKMKKTANWMGAVALLAFVLIAATSLPAVRRRRFRTFYYVHYVGTWVSVLAVHVHSRPPVTTYTVLNVALLLYQAWYRISRMSTTTVTVVPISTSLALLEFPLADLVEKPQLPSGHVRINLRAPSILGRVFQHIMPMQHPFTVASLPTDTTVRLIVRKSRFPLVNNGKYYVTGAFEPKVDFLSHRKRRMPGSWAPEPASPFQCQSPSLQSSPLHYNIKASRVLMVVGGSAISFGLPFLRILNFNGVNVRLIWVCRDYHDLRILSQFRSNFNGLEIYVTGTNCEEQDLNIDYVDYDERSSEGERDPERCALLSPKASEYNCLTPTTGGSTLSGRDAHNYSTFQNRCHSCKHLDRGCRDLEDHAIADINDEIDFTDFFSTRHSTSKYHPKENSKLPVITKDSVFRKPNYVVPPVFDRYDLKTGFTTYTTREKLSIPTGVKLFFGRPVLSPRDYHWCLQKECIGPSETNECCRADIANSTHVDDLARVWVLAAGPQALVEATRIWASDGGLHFHEESFKV.

7 consecutive transmembrane segments (helical) span residues 23 to 43 (LSGW…VPVV), 79 to 99 (TLWL…VGSA), 111 to 131 (VAAA…PLPY), 147 to 167 (VVVL…ATSG), 178 to 198 (WMGA…LPAV), 205 to 225 (TFYY…HVHS), and 256 to 276 (VTVV…ADLV). One can recognise a Ferric oxidoreductase domain in the interval 108–666 (LGRVAAAFMP…LAAGPQALVE (559 aa)). An FAD-binding site is contributed by 308–314 (HPFTVAS). The helical transmembrane segment at 392–412 (LMVVGGSAISFGLPFLRILNF) threads the bilayer. Residue 431-439 (ILSQFRSNF) coordinates NAD(+). N506 and N644 each carry an N-linked (GlcNAc...) asparagine glycan.

The cofactor is FAD.

It localises to the membrane. The enzyme catalyses 2 a Fe(II)-siderophore + NAD(+) + H(+) = 2 a Fe(III)-siderophore + NADH. In terms of biological role, is required for the uptake of Fe(3+) ions. May participate in the transport of electrons from cytoplasm to an extracellular substrate (Fe(3+) ion) via FAD and heme intermediates. Involved in iron homeostasis. This chain is Probable ferric reductase transmembrane component (FRE8), found in Eremothecium gossypii (strain ATCC 10895 / CBS 109.51 / FGSC 9923 / NRRL Y-1056) (Yeast).